The following is a 252-amino-acid chain: tRNA-cytidine(32) 2-sulfurtransferase (252 aa).

The short motif at 37–42 (SGGKDS) is the PP-loop motif element. [4Fe-4S] cluster contacts are provided by C112, C115, and C202.

This sequence belongs to the TtcA family. Homodimer. Mg(2+) serves as cofactor. [4Fe-4S] cluster is required as a cofactor.

It localises to the cytoplasm. The enzyme catalyses cytidine(32) in tRNA + S-sulfanyl-L-cysteinyl-[cysteine desulfurase] + AH2 + ATP = 2-thiocytidine(32) in tRNA + L-cysteinyl-[cysteine desulfurase] + A + AMP + diphosphate + H(+). The protein operates within tRNA modification. In terms of biological role, catalyzes the ATP-dependent 2-thiolation of cytidine in position 32 of tRNA, to form 2-thiocytidine (s(2)C32). The sulfur atoms are provided by the cysteine/cysteine desulfurase (IscS) system. In Geotalea uraniireducens (strain Rf4) (Geobacter uraniireducens), this protein is tRNA-cytidine(32) 2-sulfurtransferase.